A 203-amino-acid polypeptide reads, in one-letter code: Cell division protein SepF (203 aa).

2 disordered regions span residues 26–51 (DGEL…RRGQ) and 167–203 (GTAS…WRNQ). Composition is skewed to basic and acidic residues over residues 39–50 (EPPRRSAPERRG) and 183–203 (RRSE…WRNQ).

It belongs to the SepF family. As to quaternary structure, homodimer. Interacts with FtsZ.

It is found in the cytoplasm. Cell division protein that is part of the divisome complex and is recruited early to the Z-ring. Probably stimulates Z-ring formation, perhaps through the cross-linking of FtsZ protofilaments. Its function overlaps with FtsA. This chain is Cell division protein SepF, found in Symbiobacterium thermophilum (strain DSM 24528 / JCM 14929 / IAM 14863 / T).